We begin with the raw amino-acid sequence, 313 residues long: Hsp90 co-chaperone Cdc37-like 1 (313 aa).

It belongs to the CDC37 family. In terms of assembly, forms complexes with Hsp70 and Hsp90.

Its subcellular location is the cytoplasm. Functionally, co-chaperone that binds to numerous proteins and promotes their interaction with Hsp70 and Hsp90. This Danio rerio (Zebrafish) protein is Hsp90 co-chaperone Cdc37-like 1 (cdc37l1).